Here is a 740-residue protein sequence, read N- to C-terminus: Phosphoribosylformylglycinamidine synthase subunit PurL (740 aa).

The active site involves His50. The ATP site is built by Tyr53 and Lys92. Glu94 is a binding site for Mg(2+). Substrate contacts are provided by residues 95–98 (SHNH) and Arg117. His96 serves as the catalytic Proton acceptor. Residue Asp118 coordinates Mg(2+). Residue Gln241 participates in substrate binding. Asp269 is a Mg(2+) binding site. 313–315 (ESQ) provides a ligand contact to substrate. Positions 495 and 532 each coordinate ATP. Asn533 serves as a coordination point for Mg(2+). Position 535 (Ser535) interacts with substrate.

It belongs to the FGAMS family. In terms of assembly, monomer. Part of the FGAM synthase complex composed of 1 PurL, 1 PurQ and 2 PurS subunits.

It is found in the cytoplasm. The catalysed reaction is N(2)-formyl-N(1)-(5-phospho-beta-D-ribosyl)glycinamide + L-glutamine + ATP + H2O = 2-formamido-N(1)-(5-O-phospho-beta-D-ribosyl)acetamidine + L-glutamate + ADP + phosphate + H(+). Its pathway is purine metabolism; IMP biosynthesis via de novo pathway; 5-amino-1-(5-phospho-D-ribosyl)imidazole from N(2)-formyl-N(1)-(5-phospho-D-ribosyl)glycinamide: step 1/2. In terms of biological role, part of the phosphoribosylformylglycinamidine synthase complex involved in the purines biosynthetic pathway. Catalyzes the ATP-dependent conversion of formylglycinamide ribonucleotide (FGAR) and glutamine to yield formylglycinamidine ribonucleotide (FGAM) and glutamate. The FGAM synthase complex is composed of three subunits. PurQ produces an ammonia molecule by converting glutamine to glutamate. PurL transfers the ammonia molecule to FGAR to form FGAM in an ATP-dependent manner. PurS interacts with PurQ and PurL and is thought to assist in the transfer of the ammonia molecule from PurQ to PurL. The protein is Phosphoribosylformylglycinamidine synthase subunit PurL of Brucella abortus (strain S19).